The following is a 495-amino-acid chain: Probable cytochrome P450 508C1 (495 aa).

The chain crosses the membrane as a helical span at residues 3-21 (LLNSLLLLFLIYLIHSFYI). C442 is a binding site for heme.

The protein belongs to the cytochrome P450 family. Heme is required as a cofactor.

It localises to the membrane. This is Probable cytochrome P450 508C1 (cyp508C1) from Dictyostelium discoideum (Social amoeba).